The following is a 192-amino-acid chain: Adenylate kinase (192 aa).

10–18 lines the ATP pocket; it reads GVPGVGGTT.

Belongs to the archaeal adenylate kinase family. As to quaternary structure, monomer.

Its subcellular location is the cytoplasm. The enzyme catalyses AMP + ATP = 2 ADP. The chain is Adenylate kinase (adkA) from Methanotorris igneus (Methanococcus igneus).